The following is a 389-amino-acid chain: 26S proteasome non-ATPase regulatory subunit 6 (389 aa).

In terms of domain architecture, PCI spans 193 to 361; the sequence is DFKQAAELFL…EIVETNRPDS (169 aa).

The protein belongs to the proteasome subunit S10 family. In terms of assembly, component of the 19S proteasome regulatory particle complex. The 26S proteasome consists of a 20S core particle (CP) and two 19S regulatory subunits (RP). The regulatory particle is made of a lid composed of 9 subunits including PSMD6, a base containing 6 ATPases and few additional components.

Component of the 26S proteasome, a multiprotein complex involved in the ATP-dependent degradation of ubiquitinated proteins. This complex plays a key role in the maintenance of protein homeostasis by removing misfolded or damaged proteins, which could impair cellular functions, and by removing proteins whose functions are no longer required. Therefore, the proteasome participates in numerous cellular processes, including cell cycle progression, apoptosis, or DNA damage repair. The protein is 26S proteasome non-ATPase regulatory subunit 6 (Psmd6) of Mus musculus (Mouse).